A 314-amino-acid chain; its full sequence is tRNA dimethylallyltransferase 1 (314 aa).

Residue 8–15 (GPTGSGKS) coordinates ATP. 10 to 15 (TGSGKS) serves as a coordination point for substrate.

The protein belongs to the IPP transferase family. Monomer. The cofactor is Mg(2+).

It carries out the reaction adenosine(37) in tRNA + dimethylallyl diphosphate = N(6)-dimethylallyladenosine(37) in tRNA + diphosphate. Catalyzes the transfer of a dimethylallyl group onto the adenine at position 37 in tRNAs that read codons beginning with uridine, leading to the formation of N6-(dimethylallyl)adenosine (i(6)A). This is tRNA dimethylallyltransferase 1 from Mycobacterium ulcerans (strain Agy99).